The chain runs to 326 residues: Acetyl-coenzyme A carboxylase carboxyl transferase subunit alpha (326 aa).

The CoA carboxyltransferase C-terminal domain maps to 44–298 (KLETRAMQLR…KQALLDNLDE (255 aa)).

Belongs to the AccA family. Acetyl-CoA carboxylase is a heterohexamer composed of biotin carboxyl carrier protein (AccB), biotin carboxylase (AccC) and two subunits each of ACCase subunit alpha (AccA) and ACCase subunit beta (AccD).

The protein resides in the cytoplasm. The catalysed reaction is N(6)-carboxybiotinyl-L-lysyl-[protein] + acetyl-CoA = N(6)-biotinyl-L-lysyl-[protein] + malonyl-CoA. It functions in the pathway lipid metabolism; malonyl-CoA biosynthesis; malonyl-CoA from acetyl-CoA: step 1/1. In terms of biological role, component of the acetyl coenzyme A carboxylase (ACC) complex. First, biotin carboxylase catalyzes the carboxylation of biotin on its carrier protein (BCCP) and then the CO(2) group is transferred by the carboxyltransferase to acetyl-CoA to form malonyl-CoA. The sequence is that of Acetyl-coenzyme A carboxylase carboxyl transferase subunit alpha from Nostoc sp. (strain PCC 7120 / SAG 25.82 / UTEX 2576).